Reading from the N-terminus, the 179-residue chain is ATP synthase subunit delta (179 aa).

The protein belongs to the ATPase delta chain family. In terms of assembly, F-type ATPases have 2 components, F(1) - the catalytic core - and F(0) - the membrane proton channel. F(1) has five subunits: alpha(3), beta(3), gamma(1), delta(1), epsilon(1). F(0) has three main subunits: a(1), b(2) and c(10-14). The alpha and beta chains form an alternating ring which encloses part of the gamma chain. F(1) is attached to F(0) by a central stalk formed by the gamma and epsilon chains, while a peripheral stalk is formed by the delta and b chains.

The protein resides in the cell membrane. F(1)F(0) ATP synthase produces ATP from ADP in the presence of a proton or sodium gradient. F-type ATPases consist of two structural domains, F(1) containing the extramembraneous catalytic core and F(0) containing the membrane proton channel, linked together by a central stalk and a peripheral stalk. During catalysis, ATP synthesis in the catalytic domain of F(1) is coupled via a rotary mechanism of the central stalk subunits to proton translocation. Functionally, this protein is part of the stalk that links CF(0) to CF(1). It either transmits conformational changes from CF(0) to CF(1) or is implicated in proton conduction. The protein is ATP synthase subunit delta of Clostridium botulinum (strain 657 / Type Ba4).